Reading from the N-terminus, the 234-residue chain is Fibronectin type III domain-containing protein 4 (234 aa).

The first 44 residues, 1–44 (MPSGCHSSPPSGLRGDMASLVPLSPYLSPTVLLLVSCDLGFVRA), serve as a signal peptide directing secretion. Topologically, residues 45–167 (DRPPSPVNVT…GLDGERPLQT (123 aa)) are extracellular. The 94-residue stretch at 47-140 (PPSPVNVTVT…PRVHFRTLKG (94 aa)) folds into the Fibronectin type-III domain. N-linked (GlcNAc...) asparagine glycosylation is found at asparagine 52, asparagine 97, and asparagine 147. The segment at 122 to 160 (GLRGESPPGPRVHFRTLKGSDRLPSNSSSPGDITVEGLD) is disordered. Residues 168–188 (GEVVIIVVVLLMWAAVIGLFC) form a helical membrane-spanning segment. At 189–234 (RQYDIIKDNDSNNNPKEKGKGPEQSPQGRPVGTRQKKSPSINTIDV) the chain is on the cytoplasmic side. Residues 197–209 (NDSNNNPKEKGKG) show a composition bias toward basic and acidic residues. The tract at residues 197 to 234 (NDSNNNPKEKGKGPEQSPQGRPVGTRQKKSPSINTIDV) is disordered.

As to expression, highly expressed in the liver and the brain, including in the cortex, hypothalamus and hippocampus. Also expressed in adipose tissue.

Its subcellular location is the membrane. It localises to the secreted. Functionally, has anti-inflammatory properties. In the colon, acts on macrophages to down-regulate inflammation. May suppress osteoclastogenesis and mature osteoclast resorptive function. In white adipose tissue, decreases local inflammation, via interaction with GPR116. Also required for proper systemic glucose tolerance, specifically sensitizing white adipocytes to insulin and promoting glucose uptake. The insulin sensitizing function in adipose tissue is mediated by interaction with ADGRF5/GPR116 and activation of cAMP signaling. This is Fibronectin type III domain-containing protein 4 (FNDC4) from Homo sapiens (Human).